Consider the following 181-residue polypeptide: Negative modulator of initiation of replication (181 aa).

3 interaction with DNA regions span residues 87–88, 116–120, and 150–156; these read AV, RTRVY, and NTNTGRK.

It belongs to the SeqA family. In terms of assembly, homodimer. Polymerizes to form helical filaments.

The protein resides in the cytoplasm. In terms of biological role, negative regulator of replication initiation, which contributes to regulation of DNA replication and ensures that replication initiation occurs exactly once per chromosome per cell cycle. Binds to pairs of hemimethylated GATC sequences in the oriC region, thus preventing assembly of replication proteins and re-initiation at newly replicated origins. Repression is relieved when the region becomes fully methylated. This is Negative modulator of initiation of replication from Shigella flexneri.